A 261-amino-acid polypeptide reads, in one-letter code: Protein OSB1, mitochondrial (261 aa).

A mitochondrion-targeting transit peptide spans 1 to 28; that stretch reads MNTFFKLGSLIQRTASQISSSFPKSRFF. In terms of domain architecture, SSB spans 55-155; that stretch reads VNSVSLMGFV…VKVAEVNYVA (101 aa). Positions 189 to 238 are PDF region; the sequence is WQVFFSNPYDWWDNRRNKKNPKQPDFKHKDTGEALWLCSDLPDWITRRLE.

In terms of tissue distribution, expressed in root elongation zone and in gametophytic cells.

It is found in the mitochondrion. Regulates mitochondrial DNA recombination. Represses homologous recombination, preventing mitochondrial genome instability and unbalanced transmission of alternative mtDNA configurations. Binds preferentially single-stranded DNA. Does not bind to RNA. This Arabidopsis thaliana (Mouse-ear cress) protein is Protein OSB1, mitochondrial (OSB1).